The chain runs to 250 residues: 26 kDa periplasmic immunogenic protein (250 aa).

The signal sequence occupies residues 1 to 28 (MNTRASNFLAASFSTIMLVGAFSLPAFA).

It localises to the periplasm. The protein is 26 kDa periplasmic immunogenic protein (bp26) of Brucella melitensis biotype 1 (strain ATCC 23456 / CCUG 17765 / NCTC 10094 / 16M).